A 242-amino-acid polypeptide reads, in one-letter code: Methylthioribulose-1-phosphate dehydratase (242 aa).

Serine 87 carries the phosphoserine modification. Residue cysteine 97 coordinates substrate. Zn(2+) is bound by residues histidine 115 and histidine 117. Residue glutamate 139 is the Proton donor/acceptor of the active site. Residue histidine 195 coordinates Zn(2+).

It belongs to the aldolase class II family. MtnB subfamily. Homotetramer. Interacts with APAF1. May interact with CASP1. It depends on Zn(2+) as a cofactor. As to expression, isoform 1 is ubiquitously expressed. Isoform 2 is expressed at lower levels and detected in heart, brain, pancreas, liver, placenta, skeletal muscle and kidney.

It is found in the cytoplasm. The catalysed reaction is 5-(methylsulfanyl)-D-ribulose 1-phosphate = 5-methylsulfanyl-2,3-dioxopentyl phosphate + H2O. Its pathway is amino-acid biosynthesis; L-methionine biosynthesis via salvage pathway; L-methionine from S-methyl-5-thio-alpha-D-ribose 1-phosphate: step 2/6. In terms of biological role, catalyzes the dehydration of methylthioribulose-1-phosphate (MTRu-1-P) into 2,3-diketo-5-methylthiopentyl-1-phosphate (DK-MTP-1-P). Functions in the methionine salvage pathway, which plays a key role in cancer, apoptosis, microbial proliferation and inflammation. May inhibit the CASP1-related inflammatory response (pyroptosis), the CASP9-dependent apoptotic pathway and the cytochrome c-dependent and APAF1-mediated cell death. The protein is Methylthioribulose-1-phosphate dehydratase of Homo sapiens (Human).